The chain runs to 214 residues: Protein-L-isoaspartate O-methyltransferase (214 aa).

Ser63 is a catalytic residue.

Belongs to the methyltransferase superfamily. L-isoaspartyl/D-aspartyl protein methyltransferase family.

Its subcellular location is the cytoplasm. It carries out the reaction [protein]-L-isoaspartate + S-adenosyl-L-methionine = [protein]-L-isoaspartate alpha-methyl ester + S-adenosyl-L-homocysteine. Its function is as follows. Catalyzes the methyl esterification of L-isoaspartyl residues in peptides and proteins that result from spontaneous decomposition of normal L-aspartyl and L-asparaginyl residues. It plays a role in the repair and/or degradation of damaged proteins. The protein is Protein-L-isoaspartate O-methyltransferase of Desulfotalea psychrophila (strain LSv54 / DSM 12343).